Reading from the N-terminus, the 566-residue chain is Arginine--tRNA ligase (566 aa).

The short motif at 129–139 (ANPTGPLHIGH) is the 'HIGH' region element.

The protein belongs to the class-I aminoacyl-tRNA synthetase family. Monomer.

The protein resides in the cytoplasm. It carries out the reaction tRNA(Arg) + L-arginine + ATP = L-arginyl-tRNA(Arg) + AMP + diphosphate. This chain is Arginine--tRNA ligase, found in Wolbachia pipientis subsp. Culex pipiens (strain wPip).